The chain runs to 594 residues: DNA ligase (594 aa).

NAD(+) contacts are provided by residues 32-36 (DEEYD), 81-82 (SL), and Glu-118. Lys-120 (N6-AMP-lysine intermediate) is an active-site residue. NAD(+)-binding residues include Arg-141, Glu-181, Lys-299, and Lys-323. Zn(2+) contacts are provided by Cys-417, Cys-420, Cys-436, and Cys-442.

The protein belongs to the NAD-dependent DNA ligase family. LigA subfamily. The cofactor is Mg(2+). Mn(2+) is required as a cofactor.

It carries out the reaction NAD(+) + (deoxyribonucleotide)n-3'-hydroxyl + 5'-phospho-(deoxyribonucleotide)m = (deoxyribonucleotide)n+m + AMP + beta-nicotinamide D-nucleotide.. Functionally, DNA ligase that catalyzes the formation of phosphodiester linkages between 5'-phosphoryl and 3'-hydroxyl groups in double-stranded DNA using NAD as a coenzyme and as the energy source for the reaction. It is essential for DNA replication and repair of damaged DNA. In Blochmanniella floridana, this protein is DNA ligase.